The primary structure comprises 238 residues: Auxin-responsive protein IAA2 (238 aa).

Residues 24-28 (LCLGL) carry the EAR-like (transcriptional repression) motif. Composition is skewed to low complexity over residues 33–44 (SSSSSSKPSEGS), 59–69 (ASKPSGAAAAA), and 85–94 (ASSSSSSSKQ). Disordered regions lie at residues 33–69 (SSSS…AAAA) and 82–114 (RNLA…KDGG). The 99-residue stretch at 118–216 (GMFVKINMDG…TAKRLRVLKS (99 aa)) folds into the PB1 domain. Residues 217-238 (SDLPPPSLMRAAGSRKRAAADS) are disordered. Over residues 229–238 (GSRKRAAADS) the composition is skewed to basic residues.

Belongs to the Aux/IAA family. In terms of assembly, homodimers and heterodimers. In terms of tissue distribution, highly expressed in flowers.

Its subcellular location is the nucleus. Functionally, aux/IAA proteins are short-lived transcriptional factors that function as repressors of early auxin response genes at low auxin concentrations. The protein is Auxin-responsive protein IAA2 (IAA2) of Oryza sativa subsp. japonica (Rice).